A 259-amino-acid chain; its full sequence is Ribosomal RNA small subunit methyltransferase J (259 aa).

Residues 101–102 (RD), 117–118 (ER), 153–154 (SS), and aspartate 176 each bind S-adenosyl-L-methionine.

This sequence belongs to the methyltransferase superfamily. RsmJ family.

The protein localises to the cytoplasm. It carries out the reaction guanosine(1516) in 16S rRNA + S-adenosyl-L-methionine = N(2)-methylguanosine(1516) in 16S rRNA + S-adenosyl-L-homocysteine + H(+). In terms of biological role, specifically methylates the guanosine in position 1516 of 16S rRNA. This chain is Ribosomal RNA small subunit methyltransferase J, found in Aliivibrio fischeri (strain MJ11) (Vibrio fischeri).